The chain runs to 149 residues: MVVEANCEIPENLYYYIDGKNTVWVKIEGSDIAVVGITDLAQTMAGKIVKIRIKKKGIKVERGRPVATLESGKWAGPVPAPVSGEVVDSNSEVEKSPVILNRDPYGQGWIAKIKISNQEEVKQLLTGQQAIQKLKEIITSEKLTCKRLQ.

The Lipoyl-binding domain occupies 32-114 (IAVVGITDLA…YGQGWIAKIK (83 aa)). An N6-lipoyllysine modification is found at Lys-73.

This sequence belongs to the GcvH family. In terms of assembly, the glycine cleavage system is composed of four proteins: P, T, L and H. It depends on (R)-lipoate as a cofactor.

In terms of biological role, the glycine cleavage system catalyzes the degradation of glycine. The H protein shuttles the methylamine group of glycine from the P protein to the T protein. The chain is Probable glycine cleavage system H protein 2 from Sulfolobus acidocaldarius (strain ATCC 33909 / DSM 639 / JCM 8929 / NBRC 15157 / NCIMB 11770).